Here is a 266-residue protein sequence, read N- to C-terminus: Hydroxyethylthiazole kinase (266 aa).

M45 is a substrate binding site. ATP contacts are provided by K121 and S167. G194 serves as a coordination point for substrate.

This sequence belongs to the Thz kinase family. It depends on Mg(2+) as a cofactor.

The enzyme catalyses 5-(2-hydroxyethyl)-4-methylthiazole + ATP = 4-methyl-5-(2-phosphooxyethyl)-thiazole + ADP + H(+). It participates in cofactor biosynthesis; thiamine diphosphate biosynthesis; 4-methyl-5-(2-phosphoethyl)-thiazole from 5-(2-hydroxyethyl)-4-methylthiazole: step 1/1. Functionally, catalyzes the phosphorylation of the hydroxyl group of 4-methyl-5-beta-hydroxyethylthiazole (THZ). This is Hydroxyethylthiazole kinase from Methanocella arvoryzae (strain DSM 22066 / NBRC 105507 / MRE50).